The following is a 439-amino-acid chain: Probable N-acetylmuramidase (439 aa).

Positions 1 to 57 (MPVSRIKVKNRHLKKKAKKPLAFYKPATKFAGAVLIAGTLTTTHELLLQQTSPMVQA) are cleaved as a signal peptide. Disordered regions lie at residues 218 to 241 (SAGT…TSST) and 287 to 320 (SSSS…PASQ). The region spanning 241–284 (TTYTVKSGDTLWGISQKYGISVAQIQSANNLKSTVIYIGQKLVL) is the LysM 1 domain. Positions 287-319 (SSSSSNTNSSTSSGNSAGTTTPTTSVTPAKPAS) are enriched in low complexity. The 44-residue stretch at 321-364 (TTIKVKSGDTLWGLSVKYKTTIAQLKSWNHLNSDTIFIGQNLIV) folds into the LysM 2 domain. Residues 372-393 (SSSTGSSSASTSSTSNSSAASN) are disordered. One can recognise a LysM 3 domain in the interval 395–438 (SIHKVVKGDTLWGLSQKSGSPIASIKAWNHLSSDTILIGQYLRI).

The protein belongs to the glycosyl hydrolase 73 family.

Its subcellular location is the secreted. The enzyme catalyses Hydrolysis of (1-&gt;4)-beta-linkages between N-acetylmuramic acid and N-acetyl-D-glucosamine residues in a peptidoglycan and between N-acetyl-D-glucosamine residues in chitodextrins.. Functionally, required for cell separation during growth. The chain is Probable N-acetylmuramidase (acmA) from Lactococcus lactis subsp. lactis (strain IL1403) (Streptococcus lactis).